The sequence spans 231 residues: Small ribosomal subunit protein uS3c (231 aa).

In terms of domain architecture, KH type-2 spans 39–123 (LRNFIKKKYI…HLRLSVKPLR (85 aa)).

The protein belongs to the universal ribosomal protein uS3 family. Part of the 30S ribosomal subunit.

Its subcellular location is the plastid. It is found in the chloroplast. The polypeptide is Small ribosomal subunit protein uS3c (rps3) (Chlorella vulgaris (Green alga)).